The primary structure comprises 168 residues: Photosystem I assembly protein Ycf3 (168 aa).

3 TPR repeats span residues 35 to 68 (AFTY…EIDP), 72 to 105 (SYIL…NPFL), and 120 to 153 (GEQA…TPGN).

Belongs to the Ycf3 family.

The protein localises to the plastid. The protein resides in the chloroplast thylakoid membrane. Its function is as follows. Essential for the assembly of the photosystem I (PSI) complex. May act as a chaperone-like factor to guide the assembly of the PSI subunits. The protein is Photosystem I assembly protein Ycf3 of Ipomoea purpurea (Common morning glory).